The following is a 300-amino-acid chain: Ribonuclease HIII (300 aa).

The region spanning 86-300 is the RNase H type-2 domain; the sequence is RPRLGVDESG…FNEICDSASA (215 aa). A divalent metal cation is bound by residues Asp92, Glu93, and Asp196.

The protein belongs to the RNase HII family. RnhC subfamily. It depends on Mn(2+) as a cofactor. Mg(2+) is required as a cofactor.

The protein resides in the cytoplasm. The enzyme catalyses Endonucleolytic cleavage to 5'-phosphomonoester.. Endonuclease that specifically degrades the RNA of RNA-DNA hybrids. This chain is Ribonuclease HIII, found in Chlamydia caviae (strain ATCC VR-813 / DSM 19441 / 03DC25 / GPIC) (Chlamydophila caviae).